Consider the following 426-residue polypeptide: Adenylosuccinate synthetase (426 aa).

Residues 18-24 and 46-48 each bind GTP; these read GDEGKGK and GHT. Residue Asp19 is the Proton acceptor of the active site. Mg(2+) is bound by residues Asp19 and Gly46. IMP is bound by residues 19–22, 44–47, Thr136, Arg150, Gln222, Thr237, and Arg301; these read DEGK and NAGH. His47 acts as the Proton donor in catalysis. 297–303 contacts substrate; sequence VTTKRKR. Residues Arg303, 329–331, and 413–415 each bind GTP; these read KID and GTG.

The protein belongs to the adenylosuccinate synthetase family. Homodimer. Mg(2+) is required as a cofactor.

The protein localises to the cytoplasm. The catalysed reaction is IMP + L-aspartate + GTP = N(6)-(1,2-dicarboxyethyl)-AMP + GDP + phosphate + 2 H(+). It participates in purine metabolism; AMP biosynthesis via de novo pathway; AMP from IMP: step 1/2. Functionally, plays an important role in the de novo pathway and in the salvage pathway of purine nucleotide biosynthesis. Catalyzes the first committed step in the biosynthesis of AMP from IMP. The chain is Adenylosuccinate synthetase from Schistosoma mansoni (Blood fluke).